A 578-amino-acid chain; its full sequence is E3 ubiquitin protein ligase RIN2 (578 aa).

6 helical membrane-spanning segments follow: residues 6–26 (LPVS…WTEL), 58–78 (FTIA…VLSL), 111–131 (LVIP…TVLC), 161–181 (VYSV…LSLM), 186–206 (IGSA…FETL), and 272–292 (YLHI…VLFL). An RING-type; atypical zinc finger spans residues 337 to 379 (CAICREPMAKAKRLHCNHLFHLGCLRSWLDQGLNEVYSCPTCR). Residues 504–513 (QASTSSTTVP) are compositionally biased toward polar residues. The tract at residues 504 to 524 (QASTSSTTVPPGNGGRTGGLH) is disordered. The region spanning 538–578 (NILAMAETVREVMPHVPDEIIFQDLQRTNSVAVTVNNLLQM) is the CUE domain.

Interacts (via C-terminus) with RPM1 (via N-terminus).

Its subcellular location is the membrane. It carries out the reaction S-ubiquitinyl-[E2 ubiquitin-conjugating enzyme]-L-cysteine + [acceptor protein]-L-lysine = [E2 ubiquitin-conjugating enzyme]-L-cysteine + N(6)-ubiquitinyl-[acceptor protein]-L-lysine.. It functions in the pathway protein modification; protein ubiquitination. In terms of biological role, E3 ubiquitin protein ligase that acts as a positive regulator of RPM1- and RPS2-dependent hypersensitive response (HR), in association with RIN3. Probably not required for RPM1 degradation during HR. This is E3 ubiquitin protein ligase RIN2 (RIN2) from Arabidopsis thaliana (Mouse-ear cress).